Consider the following 448-residue polypeptide: MRECISVHVGQAGVQMGNTCWELYCLEHGIQPDGQMPSDKTIGGGDDSFTTFFCETGAGKHVPRAIFVDLEPTVIDEVRAGIYRQLFHPEQLITGKEDGANNYARGHYTIGKEIIDQVLDRIRKLADQCTGLQGFLCFHSFGGGTGSGFTSLLMERLSGDYGKKSKLEFSIYPAPQVSTAVVEPYNSILTTHTTLEHSDCAFMVDNEAIYDICRRNLDIERPTYTNLNRLISQIVSSITASLRFDGALNVDLTEFQTNLVPYPRIHFPLATYAPVISAEKAYHEQLSVAEITNSCFEPANQMVKCDPRHGKYMACCLLYRGDVVPKDVNAAIATIKTKRSIQFVDWCPTGFKVGINYQPPTVVAGGDLAKVQRIVCMLSNTTAIAEAWARLDHKFDLMYAKRAFVHWYVGEGMEEGEFSEAREDIAALEKDYEEVGLDSYEDEEEGEE.

The MREC motif signature appears at 1 to 4 (MREC). Position 11 (Gln-11) interacts with GTP. Position 40 is an N6-acetyllysine (Lys-40). GTP is bound by residues Glu-71, Ser-140, Gly-144, Thr-145, Thr-179, Asn-206, and Asn-228. A Mg(2+)-binding site is contributed by Glu-71. The active site involves Glu-254.

It belongs to the tubulin family. In terms of assembly, dimer of alpha and beta chains. A typical microtubule is a hollow water-filled tube with an outer diameter of 25 nm and an inner diameter of 15 nM. Alpha-beta heterodimers associate head-to-tail to form protofilaments running lengthwise along the microtubule wall with the beta-tubulin subunit facing the microtubule plus end conferring a structural polarity. Microtubules usually have 13 protofilaments but different protofilament numbers can be found in some organisms and specialized cells. The cofactor is Mg(2+). In terms of processing, some glutamate residues at the C-terminus are polyglycylated, resulting in polyglycine chains on the gamma-carboxyl group. Glycylation is mainly limited to tubulin incorporated into axonemes (cilia and flagella) whereas glutamylation is prevalent in neuronal cells, centrioles, axonemes, and the mitotic spindle. Both modifications can coexist on the same protein on adjacent residues, and lowering polyglycylation levels increases polyglutamylation, and reciprocally. The precise function of polyglycylation is still unclear. Some glutamate residues at the C-terminus are polyglutamylated, resulting in polyglutamate chains on the gamma-carboxyl group. Polyglutamylation plays a key role in microtubule severing by spastin (SPAST). SPAST preferentially recognizes and acts on microtubules decorated with short polyglutamate tails: severing activity by SPAST increases as the number of glutamates per tubulin rises from one to eight, but decreases beyond this glutamylation threshold. Post-translationally, acetylation of alpha chains at Lys-40 is located inside the microtubule lumen. This modification has been correlated with increased microtubule stability, intracellular transport and ciliary assembly.

It localises to the cytoplasm. The protein resides in the cytoskeleton. The enzyme catalyses GTP + H2O = GDP + phosphate + H(+). In terms of biological role, tubulin is the major constituent of microtubules, a cylinder consisting of laterally associated linear protofilaments composed of alpha- and beta-tubulin heterodimers. Microtubules grow by the addition of GTP-tubulin dimers to the microtubule end, where a stabilizing cap forms. Below the cap, tubulin dimers are in GDP-bound state, owing to GTPase activity of alpha-tubulin. The sequence is that of Tubulin alpha-5 chain from Gallus gallus (Chicken).